Consider the following 468-residue polypeptide: 6-phospho-beta-galactosidase (468 aa).

D-galactose 6-phosphate-binding residues include Gln-19, His-116, Asn-159, Glu-160, and Asn-297. The active-site Proton donor is the Glu-160. Glu-375 functions as the Nucleophile in the catalytic mechanism. 4 residues coordinate D-galactose 6-phosphate: Ser-428, Trp-429, Lys-435, and Tyr-437.

It belongs to the glycosyl hydrolase 1 family.

The catalysed reaction is a 6-phospho-beta-D-galactoside + H2O = D-galactose 6-phosphate + an alcohol. Its pathway is carbohydrate metabolism; lactose degradation; D-galactose 6-phosphate and beta-D-glucose from lactose 6-phosphate: step 1/1. This chain is 6-phospho-beta-galactosidase, found in Streptococcus pyogenes serotype M1.